Consider the following 112-residue polypeptide: Colipase (112 aa).

The N-terminal stretch at 1–17 (MEKVLILLLVALAVAYA) is a signal peptide. Positions 18-22 (VPDPR) are cleaved as a propeptide — enterostatin, activation peptide. 5 cysteine pairs are disulfide-bonded: Cys34–Cys45, Cys40–Cys56, Cys44–Cys78, Cys66–Cys86, and Cys80–Cys104.

This sequence belongs to the colipase family. As to quaternary structure, forms a 1:1 stoichiometric complex with pancreatic lipase.

It localises to the secreted. Functionally, colipase is a cofactor of pancreatic lipase. It allows the lipase to anchor itself to the lipid-water interface. Without colipase the enzyme is washed off by bile salts, which have an inhibitory effect on the lipase. Enterostatin has a biological activity as a satiety signal. This Bos taurus (Bovine) protein is Colipase (CLPS).